The sequence spans 60 residues: Sec-independent protein translocase protein TatA (60 aa).

A helical transmembrane segment spans residues 1-21; it reads MAGLGVTELLIILAIVIVLFG.

The protein belongs to the TatA/E family. Forms a complex with TatC.

It localises to the cell membrane. Functionally, part of the twin-arginine translocation (Tat) system that transports large folded proteins containing a characteristic twin-arginine motif in their signal peptide across membranes. TatA could form the protein-conducting channel of the Tat system. The polypeptide is Sec-independent protein translocase protein TatA (Herpetosiphon aurantiacus (strain ATCC 23779 / DSM 785 / 114-95)).